The primary structure comprises 237 residues: Demethylmenaquinone methyltransferase (237 aa).

Residues T62, D80, 102-103 (DA), and S119 contribute to the S-adenosyl-L-methionine site.

It belongs to the class I-like SAM-binding methyltransferase superfamily. MenG/UbiE family.

It catalyses the reaction a 2-demethylmenaquinol + S-adenosyl-L-methionine = a menaquinol + S-adenosyl-L-homocysteine + H(+). It participates in quinol/quinone metabolism; menaquinone biosynthesis; menaquinol from 1,4-dihydroxy-2-naphthoate: step 2/2. Methyltransferase required for the conversion of demethylmenaquinol (DMKH2) to menaquinol (MKH2). This chain is Demethylmenaquinone methyltransferase, found in Renibacterium salmoninarum (strain ATCC 33209 / DSM 20767 / JCM 11484 / NBRC 15589 / NCIMB 2235).